The chain runs to 1756 residues: Protein TIC 214 (1756 aa).

Transmembrane regions (helical) follow at residues 18–38 (VSGP…LPFG), 54–74 (GYGI…FLSM), 79–99 (IYAA…YMFF), 128–148 (LFMD…NPVL), 163–183 (ISFM…LTIF), and 210–230 (FSLL…LPFL). Residues 1469-1504 (KNKQVEDGQDKNGQVEDQDGQDQDGQVEDQQTDGKK) form a disordered region. Basic and acidic residues predominate over residues 1471 to 1482 (KQVEDGQDKNGQ). Residues 1484–1499 (EDQDGQDQDGQVEDQQ) show a composition bias toward acidic residues.

This sequence belongs to the TIC214 family. In terms of assembly, part of the Tic complex.

The protein resides in the plastid. Its subcellular location is the chloroplast inner membrane. In terms of biological role, involved in protein precursor import into chloroplasts. May be part of an intermediate translocation complex acting as a protein-conducting channel at the inner envelope. This chain is Protein TIC 214, found in Pinus thunbergii (Japanese black pine).